A 122-amino-acid chain; its full sequence is Large ribosomal subunit protein uL24 (122 aa).

Belongs to the universal ribosomal protein uL24 family. Part of the 50S ribosomal subunit.

One of two assembly initiator proteins, it binds directly to the 5'-end of the 23S rRNA, where it nucleates assembly of the 50S subunit. Its function is as follows. One of the proteins that surrounds the polypeptide exit tunnel on the outside of the subunit. The sequence is that of Large ribosomal subunit protein uL24 from Trichodesmium erythraeum (strain IMS101).